The primary structure comprises 2168 residues: Genome polyprotein (2168 aa).

The tract at residues Met-1–Ser-20 is disordered. Gly-2 carries the N-myristoyl glycine; by host lipid modification. Topologically, residues Gly-2–Ser-1479 are cytoplasmic. 2 amphipathic alpha-helix regions span residues Ala-551–Val-567 and Ala-554–Asp-575. Over residues Thr-576–Pro-589 the composition is skewed to polar residues. A disordered region spans residues Thr-576 to Met-607. Residues His-856 and Asp-874 each act as for protease 2A activity in the active site. 2 residues coordinate Zn(2+): Cys-891 and Cys-893. The active-site For protease 2A activity is the Cys-945. Zn(2+) is bound by residues Cys-951 and His-953. Residues Gly-1085–Gln-1157 form a membrane-binding region. Positions Gly-1085 to Thr-1223 are oligomerization. Positions Ala-1106–Met-1110 are RNA-binding. One can recognise an SF3 helicase domain in the interval Glu-1189 to Val-1347. Zn(2+)-binding residues include Cys-1354, Cys-1365, and Cys-1370. Residues Cys-1354 to Cys-1370 form a C4-type; degenerate zinc finger. The segment at Glu-1397–Val-1404 is RNA-binding. The segment at Tyr-1408–Gln-1413 is oligomerization. Residues Ser-1480–Tyr-1495 lie within the membrane without spanning it. The Cytoplasmic segment spans residues Arg-1496–Phe-2168. Tyr-1505 is modified (O-(5'-phospho-RNA)-tyrosine). The region spanning Gly-1525 to Phe-1703 is the Peptidase C3 domain. Residues His-1564, Glu-1595, and Cys-1671 each act as for protease 3C activity in the active site. The RdRp catalytic domain maps to Gly-1934–Ala-2048. 2 residues coordinate Mg(2+): Asp-1940 and Asp-2035.

This sequence belongs to the picornaviruses polyprotein family. As to quaternary structure, interacts with capsid protein VP1 and capsid protein VP3 to form heterotrimeric protomers. Interacts with capsid protein VP0, and capsid protein VP3 to form heterotrimeric protomers. Five protomers subsequently associate to form pentamers which serve as building blocks for the capsid. Interacts with capsid protein VP2, capsid protein VP3 and capsid protein VP4 following cleavage of capsid protein VP0. In terms of assembly, interacts with capsid protein VP1 and capsid protein VP3 in the mature capsid. As to quaternary structure, interacts with capsid protein VP0 and capsid protein VP1 to form heterotrimeric protomers. Five protomers subsequently associate to form pentamers which serve as building blocks for the capsid. Interacts with capsid protein VP4 in the mature capsid. Interacts with protein 2C; this interaction may be important for virion morphogenesis. Interacts with capsid protein VP1 and capsid protein VP3. In terms of assembly, homodimer. As to quaternary structure, homohexamer; forms a hexameric ring structure with 6-fold symmetry characteristic of AAA+ ATPases. Interacts (via N-terminus) with host RTN3 (via reticulon domain); this interaction is important for viral replication. Interacts with capsid protein VP3; this interaction may be important for virion morphogenesis. Interacts with protein 3CD. In terms of assembly, homodimer. Interacts with host GBF1. Interacts (via GOLD domain) with host ACBD3 (via GOLD domain); this interaction allows the formation of a viral protein 3A/ACBD3 heterotetramer with a 2:2 stoichiometry, which will stimulate the recruitment of host PI4KB in order to synthesize PI4P at the viral RNA replication sites. As to quaternary structure, interacts with RNA-directed RNA polymerase. Interacts with protein 3AB and with RNA-directed RNA polymerase. In terms of assembly, interacts with Viral protein genome-linked and with protein 3CD. Requires Mg(2+) as cofactor. In terms of processing, specific enzymatic cleavages in vivo by the viral proteases yield processing intermediates and the mature proteins. Post-translationally, myristoylation is required for the formation of pentamers during virus assembly. Further assembly of 12 pentamers and a molecule of genomic RNA generates the provirion. During virion maturation, immature virions are rendered infectious following cleavage of VP0 into VP4 and VP2. This maturation seems to be an autocatalytic event triggered by the presence of RNA in the capsid and it is followed by a conformational change infectious virion. In terms of processing, myristoylation is required during RNA encapsidation and formation of the mature virus particle. Post-translationally, VPg is uridylylated by the polymerase into VPg-pUpU. This acts as a nucleotide-peptide primer for the genomic RNA replication.

The protein localises to the virion. It localises to the host cytoplasm. Its subcellular location is the host cytoplasmic vesicle membrane. It is found in the host nucleus. It carries out the reaction a ribonucleoside 5'-triphosphate + H2O = a ribonucleoside 5'-diphosphate + phosphate + H(+). The catalysed reaction is Selective cleavage of Tyr-|-Gly bond in the picornavirus polyprotein.. It catalyses the reaction RNA(n) + a ribonucleoside 5'-triphosphate = RNA(n+1) + diphosphate. The enzyme catalyses Selective cleavage of Gln-|-Gly bond in the poliovirus polyprotein. In other picornavirus reactions Glu may be substituted for Gln, and Ser or Thr for Gly.. Its activity is regulated as follows. Replication or transcription is subject to high level of random mutations by the nucleotide analog ribavirin. Functionally, forms an icosahedral capsid of pseudo T=3 symmetry with capsid proteins VP2 and VP3. The capsid is 300 Angstroms in diameter, composed of 60 copies of each capsid protein and enclosing the viral positive strand RNA genome. Capsid protein VP1 mainly forms the vertices of the capsid. Capsid protein VP1 interacts with host cell receptor to provide virion attachment to target host cells. This attachment induces virion internalization. Tyrosine kinases are probably involved in the entry process. After binding to its receptor, the capsid undergoes conformational changes. Capsid protein VP1 N-terminus (that contains an amphipathic alpha-helix) and capsid protein VP4 are externalized. Together, they shape a pore in the host membrane through which viral genome is translocated to host cell cytoplasm. Its function is as follows. Forms an icosahedral capsid of pseudo T=3 symmetry with capsid proteins VP2 and VP3. The capsid is 300 Angstroms in diameter, composed of 60 copies of each capsid protein and enclosing the viral positive strand RNA genome. Lies on the inner surface of the capsid shell. After binding to the host receptor, the capsid undergoes conformational changes. Capsid protein VP4 is released, Capsid protein VP1 N-terminus is externalized, and together, they shape a pore in the host membrane through which the viral genome is translocated into the host cell cytoplasm. In terms of biological role, component of immature procapsids, which is cleaved into capsid proteins VP4 and VP2 after maturation. Allows the capsid to remain inactive before the maturation step. Functionally, cysteine protease that cleaves viral polyprotein and specific host proteins. It is responsible for the autocatalytic cleavage between the P1 and P2 regions, which is the first cleavage occurring in the polyprotein. Also cleaves the host translation initiation factor EIF4G1, in order to shut down the capped cellular mRNA translation. Inhibits the host nucleus-cytoplasm protein and RNA trafficking by cleaving host members of the nuclear pores. Counteracts stress granule formation probably by antagonizing its assembly or promoting its dissassembly. Its function is as follows. Plays an essential role in the virus replication cycle by acting as a viroporin. Creates a pore in the host endoplasmic reticulum and as a consequence releases Ca2+ in the cytoplasm of infected cell. In turn, high levels of cytoplasmic calcium may trigger membrane trafficking and transport of viral ER-associated proteins to viroplasms, sites of viral genome replication. Induces and associates with structural rearrangements of intracellular membranes. Displays RNA-binding, nucleotide binding and NTPase activities. May play a role in virion morphogenesis and viral RNA encapsidation by interacting with the capsid protein VP3. In terms of biological role, localizes the viral replication complex to the surface of membranous vesicles. Together with protein 3CD binds the Cis-Active RNA Element (CRE) which is involved in RNA synthesis initiation. Acts as a cofactor to stimulate the activity of 3D polymerase, maybe through a nucleid acid chaperone activity. Functionally, localizes the viral replication complex to the surface of membranous vesicles. It inhibits host cell endoplasmic reticulum-to-Golgi apparatus transport and causes the disassembly of the Golgi complex, possibly through GBF1 interaction. This would result in depletion of MHC, trail receptors and IFN receptors at the host cell surface. Plays an essential role in viral RNA replication by recruiting ACBD3 and PI4KB at the viral replication sites, thereby allowing the formation of the rearranged membranous structures where viral replication takes place. Its function is as follows. Acts as a primer for viral RNA replication and remains covalently bound to viral genomic RNA. VPg is uridylylated prior to priming replication into VPg-pUpU. The oriI viral genomic sequence may act as a template for this. The VPg-pUpU is then used as primer on the genomic RNA poly(A) by the RNA-dependent RNA polymerase to replicate the viral genome. During genome replication, the VPg-RNA linkage is removed by the host TDP2, thereby accelerating replication. During the late stage of the replication cycle, host TDP2 is excluded from sites of viral RNA synthesis and encapsidation, allowing for the generation of progeny virions. Involved in the viral replication complex and viral polypeptide maturation. It exhibits protease activity with a specificity and catalytic efficiency that is different from protease 3C. Protein 3CD lacks polymerase activity. Protein 3CD binds to the 5'UTR of the viral genome. In terms of biological role, replicates the viral genomic RNA on the surface of intracellular membranes. May form linear arrays of subunits that propagate along a strong head-to-tail interaction called interface-I. Covalently attaches UMP to a tyrosine of VPg, which is used to prime RNA synthesis. The positive stranded RNA genome is first replicated at virus induced membranous vesicles, creating a dsRNA genomic replication form. This dsRNA is then used as template to synthesize positive stranded RNA genomes. ss(+)RNA genomes are either translated, replicated or encapsidated. Functionally, major viral protease that mediates proteolytic processing of the polyprotein. Cleaves host EIF5B, contributing to host translation shutoff. Also cleaves host PABPC1, contributing to host translation shutoff. Cleaves host NLRP1, triggers host N-glycine-mediated degradation of the autoinhibitory NLRP1 N-terminal fragment. This chain is Genome polyprotein, found in Sus scrofa (Pig).